A 110-amino-acid chain; its full sequence is Early nodulin-12A (110 aa).

Positions 1–24 (MASFFLSSLVLFLAALILVPQGLA) are cleaved as a signal peptide. A disordered region spans residues 31–110 (VYEPPVNGPP…HPTEEHNIHF (80 aa)). Positions 32–43 (YEPPVNGPPVNK) are enriched in pro residues. Tandem repeats lie at residues 34–38 (PPVNG), 39–43 (PPVNK), and 44–48 (PPQKE). The segment at 34 to 88 (PPVNGPPVNKPPQKETPVHKPPQKETPVHKPPQKEPPRHKPPQKEPPRHKPPHKK) is 11 X 5 AA approximate tandem repeats of P-P-[VQRH]-[NKH]-[GKE]. Residues 45 to 81 (PQKETPVHKPPQKETPVHKPPQKEPPRHKPPQKEPPR) are compositionally biased toward basic and acidic residues. The stretch at 49 to 53 (TPVHK) is one 4; approximate repeat. Copy 5 of the repeat occupies 54 to 58 (PPQKE). Residues 59–63 (TPVHK) form a 6; approximate repeat. Tandem repeats lie at residues 64 to 68 (PPQKE), 69 to 73 (PPRHK), 74 to 78 (PPQKE), 79 to 83 (PPRHK), and 84 to 88 (PPHKK). Residues 82 to 93 (HKPPHKKSHLHV) are compositionally biased toward basic residues. The segment covering 101–110 (HPTEEHNIHF) has biased composition (basic and acidic residues).

It belongs to the plant proline-rich protein superfamily. ENOD12 family. In terms of tissue distribution, root nodules, stem and flower.

Its subcellular location is the secreted. It is found in the cell wall. In terms of biological role, involved in the infection process during the plant-rhizobium interaction. The chain is Early nodulin-12A (ENOD12A) from Pisum sativum (Garden pea).